A 638-amino-acid chain; its full sequence is Phosphomethylpyrimidine synthase (638 aa).

Substrate-binding positions include asparagine 235, methionine 264, tyrosine 293, histidine 329, 349 to 351, 390 to 393, and glutamate 429; these read SRG and DGLR. Histidine 433 serves as a coordination point for Zn(2+). Tyrosine 456 serves as a coordination point for substrate. Histidine 497 contributes to the Zn(2+) binding site. Residues cysteine 577, cysteine 580, and cysteine 585 each contribute to the [4Fe-4S] cluster site.

Belongs to the ThiC family. In terms of assembly, homodimer. The cofactor is [4Fe-4S] cluster.

The catalysed reaction is 5-amino-1-(5-phospho-beta-D-ribosyl)imidazole + S-adenosyl-L-methionine = 4-amino-2-methyl-5-(phosphooxymethyl)pyrimidine + CO + 5'-deoxyadenosine + formate + L-methionine + 3 H(+). It functions in the pathway cofactor biosynthesis; thiamine diphosphate biosynthesis. Functionally, catalyzes the synthesis of the hydroxymethylpyrimidine phosphate (HMP-P) moiety of thiamine from aminoimidazole ribotide (AIR) in a radical S-adenosyl-L-methionine (SAM)-dependent reaction. The protein is Phosphomethylpyrimidine synthase of Polaromonas naphthalenivorans (strain CJ2).